Consider the following 591-residue polypeptide: Oxaloacetate decarboxylase alpha chain (591 aa).

Residues 3–263 form the Pyruvate carboxyltransferase domain; sequence IAITDVVLRD…DTGLDILKLE (261 aa). The Biotinyl-binding domain occupies 518–591; the sequence is PAGAGTPVTA…SVGDTLMTLA (74 aa). The residue at position 557 (lysine 557) is an N6-biotinyllysine.

As to quaternary structure, composed of three chains (alpha, beta, and gamma). It depends on biotin as a cofactor.

The catalysed reaction is oxaloacetate + 2 Na(+)(in) + H(+) = pyruvate + 2 Na(+)(out) + CO2. Catalyzes the decarboxylation of oxaloacetate coupled to Na(+) translocation. This is Oxaloacetate decarboxylase alpha chain (oadA1) from Salmonella typhimurium (strain LT2 / SGSC1412 / ATCC 700720).